The sequence spans 523 residues: UvrABC system protein C (523 aa).

Positions 15–93 (HLPGCYLFKD…IKKHWPRYNI (79 aa)) constitute a GIY-YIG domain. The UVR domain occupies 197–232 (RELIESMETEMKEMAAKQMFEQAMELRDEIAALEYL).

It belongs to the UvrC family. Interacts with UvrB in an incision complex.

It localises to the cytoplasm. In terms of biological role, the UvrABC repair system catalyzes the recognition and processing of DNA lesions. UvrC both incises the 5' and 3' sides of the lesion. The N-terminal half is responsible for the 3' incision and the C-terminal half is responsible for the 5' incision. The sequence is that of UvrABC system protein C from Methanosarcina mazei (strain ATCC BAA-159 / DSM 3647 / Goe1 / Go1 / JCM 11833 / OCM 88) (Methanosarcina frisia).